A 103-amino-acid polypeptide reads, in one-letter code: Cytochrome c-552 (103 aa).

The first 22 residues, 1–22, serve as a signal peptide directing secretion; it reads MKTAWLGTFAASALLVAGYAQA. Positions 32, 35, 36, and 81 each coordinate heme c.

In terms of assembly, monomer. Post-translationally, binds 1 heme c group covalently per subunit.

The protein resides in the periplasm. Functionally, monoheme c-type cytochrome. Probable electron donor to membrane cytochrome oxidase and to periplasmic nitrite reductase. This is Cytochrome c-552 (cyt) from Nitrosomonas europaea (strain ATCC 19718 / CIP 103999 / KCTC 2705 / NBRC 14298).